Reading from the N-terminus, the 502-residue chain is ATP synthase subunit alpha (502 aa).

169 to 176 (GDRQTGKT) contacts ATP.

This sequence belongs to the ATPase alpha/beta chains family. As to quaternary structure, F-type ATPases have 2 components, CF(1) - the catalytic core - and CF(0) - the membrane proton channel. CF(1) has five subunits: alpha(3), beta(3), gamma(1), delta(1), epsilon(1). CF(0) has three main subunits: a(1), b(2) and c(9-12). The alpha and beta chains form an alternating ring which encloses part of the gamma chain. CF(1) is attached to CF(0) by a central stalk formed by the gamma and epsilon chains, while a peripheral stalk is formed by the delta and b chains.

It localises to the cell inner membrane. It carries out the reaction ATP + H2O + 4 H(+)(in) = ADP + phosphate + 5 H(+)(out). Produces ATP from ADP in the presence of a proton gradient across the membrane. The alpha chain is a regulatory subunit. This Oleidesulfovibrio alaskensis (strain ATCC BAA-1058 / DSM 17464 / G20) (Desulfovibrio alaskensis) protein is ATP synthase subunit alpha.